Here is a 213-residue protein sequence, read N- to C-terminus: tRNA (guanine-N(7)-)-methyltransferase (213 aa).

S-adenosyl-L-methionine-binding residues include Glu-44, Glu-69, Asn-96, and Asp-118. Residue Asp-118 is part of the active site. Lys-122 lines the substrate pocket. Residues Arg-124 to Arg-129 form an interaction with RNA region. Substrate contacts are provided by residues Asp-154 and Thr-192–Glu-195.

This sequence belongs to the class I-like SAM-binding methyltransferase superfamily. TrmB family.

The enzyme catalyses guanosine(46) in tRNA + S-adenosyl-L-methionine = N(7)-methylguanosine(46) in tRNA + S-adenosyl-L-homocysteine. The protein operates within tRNA modification; N(7)-methylguanine-tRNA biosynthesis. Functionally, catalyzes the formation of N(7)-methylguanine at position 46 (m7G46) in tRNA. This is tRNA (guanine-N(7)-)-methyltransferase from Latilactobacillus sakei subsp. sakei (strain 23K) (Lactobacillus sakei subsp. sakei).